A 126-amino-acid polypeptide reads, in one-letter code: Holo-[acyl-carrier-protein] synthase (126 aa).

Residues D9 and E58 each contribute to the Mg(2+) site.

Belongs to the P-Pant transferase superfamily. AcpS family. It depends on Mg(2+) as a cofactor.

The protein localises to the cytoplasm. The catalysed reaction is apo-[ACP] + CoA = holo-[ACP] + adenosine 3',5'-bisphosphate + H(+). Functionally, transfers the 4'-phosphopantetheine moiety from coenzyme A to a Ser of acyl-carrier-protein. The protein is Holo-[acyl-carrier-protein] synthase of Escherichia coli (strain K12 / MC4100 / BW2952).